The primary structure comprises 201 residues: Small ribosomal subunit protein uS4c (201 aa).

Residues 15–44 are disordered; the sequence is LGALPGLTNKRPRAGSDLRNQSRSGKKSQY. The region spanning 89 to 149 is the S4 RNA-binding domain; sequence MRLDNILFRL…DEQNSRALIQ (61 aa).

This sequence belongs to the universal ribosomal protein uS4 family. In terms of assembly, part of the 30S ribosomal subunit. Contacts protein S5. The interaction surface between S4 and S5 is involved in control of translational fidelity.

It localises to the plastid. The protein resides in the chloroplast. One of the primary rRNA binding proteins, it binds directly to 16S rRNA where it nucleates assembly of the body of the 30S subunit. Its function is as follows. With S5 and S12 plays an important role in translational accuracy. The polypeptide is Small ribosomal subunit protein uS4c (rps4) (Daucus carota (Wild carrot)).